We begin with the raw amino-acid sequence, 121 residues long: Large ribosomal subunit protein bL20 (121 aa).

It belongs to the bacterial ribosomal protein bL20 family.

In terms of biological role, binds directly to 23S ribosomal RNA and is necessary for the in vitro assembly process of the 50S ribosomal subunit. It is not involved in the protein synthesizing functions of that subunit. In Methylorubrum extorquens (strain PA1) (Methylobacterium extorquens), this protein is Large ribosomal subunit protein bL20.